The primary structure comprises 121 residues: Large ribosomal subunit protein uL14c (121 aa).

Belongs to the universal ribosomal protein uL14 family. Part of the 50S ribosomal subunit.

The protein resides in the plastid. It is found in the chloroplast. In terms of biological role, binds to 23S rRNA. This is Large ribosomal subunit protein uL14c from Thalassiosira pseudonana (Marine diatom).